Here is a 311-residue protein sequence, read N- to C-terminus: Ferritin-like catalase Nec2 (311 aa).

The N-terminal stretch at 1–25 is a signal peptide; the sequence is MAFLSNMAMFITMLMFSSMMHPCFS. N-linked (GlcNAc...) asparagine glycosylation is found at asparagine 128, asparagine 257, and asparagine 289.

Forms homomultimers. In terms of tissue distribution, observed in all flowers organs; mainly expressed in nectaries and, to a lower extent, in petals and ovules, as well as in stigmas and calyx at low levels.

The catalysed reaction is 2 H2O2 = O2 + 2 H2O. Functionally, involved in the production of blood-red nectar containing the alkaloid nesocodin and that serves as a visual attractant for pollinator visitation, including vertebrates such as Phelsuma geckos. The nectar is initially acidic and pale yellow, but slowly becomes alkaline before turning into red within 24 hours. Together with NEC1 and NEC3, facilitates the condensation of sinapaldehyde ((E)-3,5-dimethoxy-4-hydroxycinnamaldehyde) and proline to form nesocodin, a pigment with a stable imine bond. Protects nesocodin from degradation by hydrogen peroxide H(2)O(2) by catalyzing the degradation of H(2)O(2) into water H(2)O and dioxygene O(2). This Nesocodon mauritianus (Blue Mauritius bellflower) protein is Ferritin-like catalase Nec2.